The primary structure comprises 371 residues: Nicotinate-nucleotide pyrophosphorylase [carboxylating], chloroplastic (371 aa).

The N-terminal 48 residues, 1 to 48, are a transit peptide targeting the chloroplast; sequence MPAAAAAAAPPNPNVLQLAPRLRGLVSFPSSYSSSSPFSNRLRLRLPR. Residues Arg-162, 193–195, Arg-217, Lys-227, Glu-260, Asp-287, 319–321, and 340–342 contribute to the substrate site; these read TRK, SGN, and SGA.

This sequence belongs to the NadC/ModD family.

The protein resides in the plastid. It localises to the chloroplast. It carries out the reaction nicotinate beta-D-ribonucleotide + CO2 + diphosphate = quinolinate + 5-phospho-alpha-D-ribose 1-diphosphate + 2 H(+). Its pathway is cofactor biosynthesis; NAD(+) biosynthesis; nicotinate D-ribonucleotide from quinolinate: step 1/1. Involved in the catabolism of quinolinic acid (QA). The chain is Nicotinate-nucleotide pyrophosphorylase [carboxylating], chloroplastic from Oryza sativa subsp. japonica (Rice).